The sequence spans 508 residues: Citrate lyase alpha chain (508 aa).

Oligomer with a subunit composition of (alpha,beta,gamma)6.

The protein localises to the cytoplasm. It catalyses the reaction citrate = oxaloacetate + acetate. The enzyme catalyses citrate + acetyl-CoA = (3S)-citryl-CoA + acetate. Functionally, represents a citrate:acetyl-ACP transferase. The sequence is that of Citrate lyase alpha chain (citF) from Klebsiella pneumoniae.